The sequence spans 351 residues: D-alanine--D-alanine ligase (351 aa).

In terms of domain architecture, ATP-grasp spans 135–343 (NQIFLQSGQK…MEEVFADLIE (209 aa)). Position 167–222 (167–222 (LMSLGFPQFLKPVEGGSSVSTYKITNQEQLSRQLALIFESDSKVMSQSFLAGTEVS)) interacts with ATP. Residues Asp298, Glu310, and Asn312 each coordinate Mg(2+).

The protein belongs to the D-alanine--D-alanine ligase family. Mg(2+) is required as a cofactor. It depends on Mn(2+) as a cofactor.

Its subcellular location is the cytoplasm. The catalysed reaction is 2 D-alanine + ATP = D-alanyl-D-alanine + ADP + phosphate + H(+). It participates in cell wall biogenesis; peptidoglycan biosynthesis. Functionally, cell wall formation. The polypeptide is D-alanine--D-alanine ligase (Leptospira borgpetersenii serovar Hardjo-bovis (strain JB197)).